Consider the following 1137-residue polypeptide: Phytochrome C (1137 aa).

A compositionally biased stretch (low complexity) spans 1–18; sequence MSSSRSNNRATCSRSSSA. A disordered region spans residues 1 to 27; it reads MSSSRSNNRATCSRSSSARSKHSARVV. Residues 217–400 enclose the GAF domain; it reads NLSLLCDVLV…VFGIQINKEV (184 aa). Residue Cys-322 participates in phytochromobilin binding. 2 PAS domains span residues 620–690 and 750–824; these read VTNE…LQGI and IQGD…TKLS. Residues 904–1124 form the Histidine kinase domain; the sequence is YIRQELRNPL…IVLVEFPVAQ (221 aa).

It belongs to the phytochrome family. Homodimer. Contains one covalently linked phytochromobilin chromophore.

In terms of biological role, regulatory photoreceptor which exists in two forms that are reversibly interconvertible by light: the Pr form that absorbs maximally in the red region of the spectrum and the Pfr form that absorbs maximally in the far-red region. Photoconversion of Pr to Pfr induces an array of morphogenic responses, whereas reconversion of Pfr to Pr cancels the induction of those responses. Pfr controls the expression of a number of nuclear genes including those encoding the small subunit of ribulose-bisphosphate carboxylase, chlorophyll A/B binding protein, protochlorophyllide reductase, rRNA, etc. It also controls the expression of its own gene(s) in a negative feedback fashion. The chain is Phytochrome C (PHYC) from Oryza sativa subsp. indica (Rice).